The following is a 431-amino-acid chain: Serine/threonine-protein kinase Sgk1 (431 aa).

The segment at 58–93 (LNLTPPQDPELMNSNPSPPPSPSQQINLGPSSNPSA) is disordered. Over residues 81-93 (QQINLGPSSNPSA) the composition is skewed to polar residues. The region spanning 98–355 (FHFLKVIGKG…FTEIKNHVFF (258 aa)) is the Protein kinase domain. Residues 104-112 (IGKGSFGKV) and K127 each bind ATP. D222 serves as the catalytic Proton acceptor. Residues 356-431 (SPINWDDLNA…SYAPSMDSYL (76 aa)) form the AGC-kinase C-terminal domain.

This sequence belongs to the protein kinase superfamily. AGC Ser/Thr protein kinase family.

It is found in the cytoplasm. The protein resides in the nucleus. Its subcellular location is the endoplasmic reticulum. The enzyme catalyses L-seryl-[protein] + ATP = O-phospho-L-seryl-[protein] + ADP + H(+). It catalyses the reaction L-threonyl-[protein] + ATP = O-phospho-L-threonyl-[protein] + ADP + H(+). In terms of biological role, protein kinase that may play an important role in cellular stress response. May be involved in the regulation of processes such as cell survival, neuronal excitability and renal sodium excretion. The polypeptide is Serine/threonine-protein kinase Sgk1 (sgk1) (Fundulus heteroclitus (Killifish)).